Consider the following 533-residue polypeptide: Berberine bridge enzyme-like 28 (533 aa).

A signal peptide spans 1 to 23; that stretch reads MEFSSFLFTILLFSLNISPLVSA. A disulfide bond links Cys34 and Cys96. Positions 74–249 constitute an FAD-binding PCMH-type domain; that stretch reads ETPKPVSIIT…LSWKVKLVDV (176 aa). His111 is subject to Pros-8alpha-FAD histidine. Asn142 and Asn440 each carry an N-linked (GlcNAc...) asparagine glycan.

Belongs to the oxygen-dependent FAD-linked oxidoreductase family. It depends on FAD as a cofactor.

It is found in the secreted. It localises to the cell wall. Its function is as follows. Involved in adaptation to salt stress. This Arabidopsis thaliana (Mouse-ear cress) protein is Berberine bridge enzyme-like 28.